Reading from the N-terminus, the 234-residue chain is Cyclin-J18 (234 aa).

This sequence belongs to the cyclin family.

This Arabidopsis thaliana (Mouse-ear cress) protein is Cyclin-J18 (CYCJ18).